A 543-amino-acid polypeptide reads, in one-letter code: Probable protein kinase UbiB (543 aa).

Positions 123–500 constitute a Protein kinase domain; the sequence is DFDQQPLASA…HRRHAQARFL (378 aa). Residues 129 to 137 and lysine 152 contribute to the ATP site; that span reads LASASVAQV. Catalysis depends on aspartate 286, which acts as the Proton acceptor. Helical transmembrane passes span 499–519 and 521–541; these read FLLGAGATLLLGSILLLPTHE and LASAGLTISIICWLNGWWKIS.

It belongs to the ABC1 family. UbiB subfamily.

The protein resides in the cell inner membrane. The protein operates within cofactor biosynthesis; ubiquinone biosynthesis [regulation]. Its function is as follows. Is probably a protein kinase regulator of UbiI activity which is involved in aerobic coenzyme Q (ubiquinone) biosynthesis. The polypeptide is Probable protein kinase UbiB (Tolumonas auensis (strain DSM 9187 / NBRC 110442 / TA 4)).